The primary structure comprises 166 residues: Interferon gamma (166 aa).

An N-terminal signal peptide occupies residues 1–23; that stretch reads MNYTSYILAFQLCVILCSSGYYC. Glutamine 24 carries the pyrrolidone carboxylic acid modification. Residues asparagine 39 and asparagine 106 are each glycosylated (N-linked (GlcNAc...) asparagine).

The protein belongs to the type II (or gamma) interferon family. Homodimer. Interacts with IFNGR1 (via extracellular domain); this interaction promotes IFNGR1 dimerization. In terms of tissue distribution, released primarily from activated T lymphocytes.

The protein localises to the secreted. Its function is as follows. Type II interferon produced by immune cells such as T-cells and NK cells that plays crucial roles in antimicrobial, antiviral, and antitumor responses by activating effector immune cells and enhancing antigen presentation. Primarily signals through the JAK-STAT pathway after interaction with its receptor IFNGR1 to affect gene regulation. Upon IFNG binding, IFNGR1 intracellular domain opens out to allow association of downstream signaling components JAK2, JAK1 and STAT1, leading to STAT1 activation, nuclear translocation and transcription of IFNG-regulated genes. Many of the induced genes are transcription factors such as IRF1 that are able to further drive regulation of a next wave of transcription. Plays a role in class I antigen presentation pathway by inducing a replacement of catalytic proteasome subunits with immunoproteasome subunits. In turn, increases the quantity, quality, and repertoire of peptides for class I MHC loading. Increases the efficiency of peptide generation also by inducing the expression of activator PA28 that associates with the proteasome and alters its proteolytic cleavage preference. Up-regulates as well MHC II complexes on the cell surface by promoting expression of several key molecules such as cathepsins B/CTSB, H/CTSH, and L/CTSL. Participates in the regulation of hematopoietic stem cells during development and under homeostatic conditions by affecting their development, quiescence, and differentiation. The chain is Interferon gamma (IFNG) from Ailuropoda melanoleuca (Giant panda).